Consider the following 145-residue polypeptide: Procyclic form-specific polypeptide B-alpha (145 aa).

Residues methionine 1–alanine 27 form the signal peptide. The interval alanine 28 to leucine 127 is disordered. The segment covering proline 31 to alanine 52 has biased composition (basic and acidic residues). 32 consecutive repeat copies span residues aspartate 59–proline 60, aspartate 61–proline 62, glutamate 63–proline 64, glutamate 65–proline 66, glutamate 67–proline 68, glutamate 69–proline 70, glutamate 71–proline 72, glutamate 73–proline 74, glutamate 75–proline 76, glutamate 77–proline 78, glutamate 79–proline 80, glutamate 81–proline 82, glutamate 83–proline 84, glutamate 85–proline 86, glutamate 87–proline 88, glutamate 89–proline 90, glutamate 91–proline 92, glutamate 93–proline 94, glutamate 95–proline 96, glutamate 97–proline 98, glutamate 99–proline 100, glutamate 101–proline 102, glutamate 103–proline 104, glutamate 105–proline 106, glutamate 107–proline 108, glutamate 109–proline 110, glutamate 111–proline 112, glutamate 113–proline 114, glutamate 115–proline 116, glutamate 117–proline 118, glutamate 119–proline 120, and glutamate 121–proline 122. The tract at residues aspartate 59–proline 122 is 32 X 2 AA tandem repeats of [DE]-P. The span at proline 60 to proline 120 shows a compositional bias: acidic residues. Glycine 123 is lipidated: GPI-anchor amidated glycine. The propeptide occupies alanine 124–phenylalanine 145.

The protein resides in the cell membrane. Its function is as follows. Major surface antigen of procyclic forms. The chain is Procyclic form-specific polypeptide B-alpha (PARPB) from Trypanosoma brucei brucei.